A 487-amino-acid chain; its full sequence is Glutamyl-tRNA(Gln) amidotransferase subunit A (487 aa).

Active-site charge relay system residues include K79 and S158. The active-site Acyl-ester intermediate is S182.

It belongs to the amidase family. GatA subfamily. Heterotrimer of A, B and C subunits.

It carries out the reaction L-glutamyl-tRNA(Gln) + L-glutamine + ATP + H2O = L-glutaminyl-tRNA(Gln) + L-glutamate + ADP + phosphate + H(+). Its function is as follows. Allows the formation of correctly charged Gln-tRNA(Gln) through the transamidation of misacylated Glu-tRNA(Gln) in organisms which lack glutaminyl-tRNA synthetase. The reaction takes place in the presence of glutamine and ATP through an activated gamma-phospho-Glu-tRNA(Gln). The sequence is that of Glutamyl-tRNA(Gln) amidotransferase subunit A from Ehrlichia canis (strain Jake).